Consider the following 419-residue polypeptide: Lipoyl synthase, mitochondrial (419 aa).

A mitochondrion-targeting transit peptide spans 1-26; sequence MAVCAGRLKCFGNPAVSLRTAASRAY. Residues 28–47 show a composition bias toward low complexity; that stretch reads TTTSPDPAIPSSSSASSSSA. The segment at 28–61 is disordered; it reads TTTSPDPAIPSSSSASSSSALPKRPQTSFRDKLN. The [4Fe-4S] cluster site is built by Cys136, Cys141, Cys147, Cys167, Cys171, Cys174, and Ser382. Residues 150–371 form the Radical SAM core domain; that stretch reads GSSKSAATAT…KDRALEMGFL (222 aa). The segment at 399–419 is disordered; sequence AESTGPESTNVPNVTPDAIVR.

The protein belongs to the radical SAM superfamily. Lipoyl synthase family. It depends on [4Fe-4S] cluster as a cofactor.

It localises to the mitochondrion. It carries out the reaction [[Fe-S] cluster scaffold protein carrying a second [4Fe-4S](2+) cluster] + N(6)-octanoyl-L-lysyl-[protein] + 2 oxidized [2Fe-2S]-[ferredoxin] + 2 S-adenosyl-L-methionine + 4 H(+) = [[Fe-S] cluster scaffold protein] + N(6)-[(R)-dihydrolipoyl]-L-lysyl-[protein] + 4 Fe(3+) + 2 hydrogen sulfide + 2 5'-deoxyadenosine + 2 L-methionine + 2 reduced [2Fe-2S]-[ferredoxin]. The protein operates within protein modification; protein lipoylation via endogenous pathway; protein N(6)-(lipoyl)lysine from octanoyl-[acyl-carrier-protein]: step 2/2. In terms of biological role, catalyzes the radical-mediated insertion of two sulfur atoms into the C-6 and C-8 positions of the octanoyl moiety bound to the lipoyl domains of lipoate-dependent enzymes, thereby converting the octanoylated domains into lipoylated derivatives. This Coccidioides posadasii (strain C735) (Valley fever fungus) protein is Lipoyl synthase, mitochondrial.